Here is a 117-residue protein sequence, read N- to C-terminus: Non-specific lipid-transfer protein (117 aa).

The first 26 residues, 1 to 26 (MACSAMTKLALVVALCMVVSVPIAQA), serve as a signal peptide directing secretion. 4 cysteine pairs are disulfide-bonded: C29–C76, C39–C53, C54–C99, and C74–C113.

It belongs to the plant LTP family.

Plant non-specific lipid-transfer proteins transfer phospholipids as well as galactolipids across membranes. May play a role in wax or cutin deposition in the cell walls of expanding epidermal cells and certain secretory tissues. This Prunus avium (Cherry) protein is Non-specific lipid-transfer protein.